The primary structure comprises 385 residues: 8-amino-7-oxononanoate synthase (385 aa).

R21 is a substrate binding site. 108-109 (GF) contacts pyridoxal 5'-phosphate. Residue H133 coordinates substrate. The pyridoxal 5'-phosphate site is built by S179, H207, and T233. Residue K236 is modified to N6-(pyridoxal phosphate)lysine. T352 is a binding site for substrate.

This sequence belongs to the class-II pyridoxal-phosphate-dependent aminotransferase family. BioF subfamily. As to quaternary structure, homodimer. Pyridoxal 5'-phosphate serves as cofactor.

The catalysed reaction is 6-carboxyhexanoyl-[ACP] + L-alanine + H(+) = (8S)-8-amino-7-oxononanoate + holo-[ACP] + CO2. It participates in cofactor biosynthesis; biotin biosynthesis. Its function is as follows. Catalyzes the decarboxylative condensation of pimeloyl-[acyl-carrier protein] and L-alanine to produce 8-amino-7-oxononanoate (AON), [acyl-carrier protein], and carbon dioxide. In Salmonella schwarzengrund (strain CVM19633), this protein is 8-amino-7-oxononanoate synthase.